We begin with the raw amino-acid sequence, 454 residues long: Exopolyphosphatase PRUNE1 (454 aa).

The residue at position 1 (Met1) is an N-acetylmethionine. Mn(2+) contacts are provided by Asp28, Asp30, Asp106, and Asp179. The DHH motif motif lies at 106 to 108; the sequence is DHH. Residues 394–421 are essential for homodimerization; the sequence is SLIAGLSQDDEDPPLPPTPMNSLVDECP. The segment at 398–421 is disordered; sequence GLSQDDEDPPLPPTPMNSLVDECP. Phosphoserine is present on Ser400. Thr411 bears the Phosphothreonine mark. Ser415 bears the Phosphoserine mark.

Belongs to the PPase class C family. Prune subfamily. In terms of assembly, homooligomer. Able to homodimerize via its C-terminal domain. Interacts with NME1. Interacts with GSK3; at focal adhesion complexes where paxillin and vinculin are colocalized. Interacts with alpha and beta tubulin. The cofactor is Mn(2+).

It is found in the cytoplasm. It localises to the nucleus. Its subcellular location is the cell junction. The protein resides in the focal adhesion. The catalysed reaction is diphosphate + H2O = 2 phosphate + H(+). Its activity is regulated as follows. Activated by magnesium ions and inhibited by manganese ions. Inhibited by dipyridamole, moderately sensitive to IBMX and inhibited by vinpocetine. Its function is as follows. Phosphodiesterase (PDE) that has higher activity toward cAMP than cGMP, as substrate. Plays a role in cell proliferation, migration and differentiation, and acts as a negative regulator of NME1. Plays a role in the regulation of neurogenesis. Involved in the regulation of microtubule polymerization. This is Exopolyphosphatase PRUNE1 (Prune1) from Rattus norvegicus (Rat).